A 203-amino-acid chain; its full sequence is Large ribosomal subunit protein uL13 (203 aa).

The residue at position 2 (alanine 2) is an N-acetylalanine. Citrulline is present on arginine 59. At serine 77 the chain carries Phosphoserine. Arginine 140 carries the citrulline modification. The residue at position 191 (lysine 191) is an N6-acetyllysine.

Belongs to the universal ribosomal protein uL13 family. In terms of assembly, component of the 60S ribosome. Component of the GAIT complex. Interacts with EIF4G1. Phosphorylation at Ser-77 upon interferon-gamma treatment in monocytes involves a DAPK1-DAPK3 kinase cascade and is causing release from the ribosome, association with the GAIT complex and subsequent involvement in transcript-selective translation inhibition. Post-translationally, citrullinated by PADI4.

The protein localises to the cytoplasm. Functionally, associated with ribosomes but is not required for canonical ribosome function and has extra-ribosomal functions. Component of the GAIT (gamma interferon-activated inhibitor of translation) complex which mediates interferon-gamma-induced transcript-selective translation inhibition in inflammation processes. Upon interferon-gamma activation and subsequent phosphorylation dissociates from the ribosome and assembles into the GAIT complex which binds to stem loop-containing GAIT elements in the 3'-UTR of diverse inflammatory mRNAs (such as ceruplasmin) and suppresses their translation. In the GAIT complex interacts with m7G cap-bound eIF4G at or near the eIF3-binding site and blocks the recruitment of the 43S ribosomal complex. Involved in methylation of rRNA. The sequence is that of Large ribosomal subunit protein uL13 (RPL13A) from Oryctolagus cuniculus (Rabbit).